The chain runs to 553 residues: RNA N(6)-adenosine-methyltransferase METTL16 (553 aa).

The tract at residues 17-20 is RNA-binding; that stretch reads PPDF. S-adenosyl-L-methionine is bound by residues R82, G110, S114, E133, T164, and N184. Residues 163-167 are K-loop; the sequence is KTLLM. RNA-binding stretches follow at residues 199 to 211, 250 to 254, and 277 to 283; these read SRNSRRPPPSSVN, GKKCS, and QGRTMRW. A VCR 1 region spans residues 289–400; it reads FYDDVTVPSP…QLREVPRAPE (112 aa). 3 positions are modified to phosphoserine: S329, S425, and S429. The tract at residues 457–496 is disordered; sequence EETPEATEDERDEERGGMEAMESCKGSSNGAQDGEASEKG. Residues 458–468 are compositionally biased toward acidic residues; it reads ETPEATEDERD. At T463 the chain carries Phosphothreonine. Residues 506-553 form a VCR 2 region; the sequence is YLFKCLVNIKKEAGDAVVEMHWVEGQNRDLMNQLCTYVRNQILRLVAS.

The protein belongs to the methyltransferase superfamily. METTL16/RlmF family. In terms of assembly, interacts with MEPCE. Interacts with LARP7.

Its subcellular location is the nucleus. It is found in the cytoplasm. It catalyses the reaction adenosine in U6 snRNA + S-adenosyl-L-methionine = N(6)-methyladenosine in U6 snRNA + S-adenosyl-L-homocysteine + H(+). The enzyme catalyses an adenosine in mRNA + S-adenosyl-L-methionine = an N(6)-methyladenosine in mRNA + S-adenosyl-L-homocysteine + H(+). Its activity is regulated as follows. Methyltransferase activity is autoinhibited by the K-loop region that blocks S-adenosyl-L-methionine-binding. Upon activation, K-loop changes conformation, allowing S-adenosyl-L-methionine-binding and subsequent methyltransferase activity. mRNA N6-adenosine-methyltransferase activity is inhibited by zinc. Its function is as follows. RNA N6-methyltransferase that methylates adenosine residues at the N(6) position of a subset of RNAs and is involved in S-adenosyl-L-methionine homeostasis by regulating expression of MAT2A transcripts. Able to N6-methylate a subset of mRNAs and U6 small nuclear RNAs (U6 snRNAs). In contrast to the METTL3-METTL14 heterodimer, only able to methylate a limited number of RNAs: requires both a 5'UACAGAGAA-3' nonamer sequence and a specific RNA structure. Plays a key role in S-adenosyl-L-methionine homeostasis by mediating N6-methylation of MAT2A mRNAs, altering splicing of MAT2A transcripts: in presence of S-adenosyl-L-methionine, binds the 3'-UTR region of MAT2A mRNA and specifically N6-methylates the first hairpin of MAT2A mRNA, preventing recognition of their 3'-splice site by U2AF1/U2AF35, thereby inhibiting splicing and protein production of S-adenosylmethionine synthase. In S-adenosyl-L-methionine-limiting conditions, binds the 3'-UTR region of MAT2A mRNA but stalls due to the lack of a methyl donor, preventing N6-methylation and promoting expression of MAT2A. In addition to mRNAs, also able to mediate N6-methylation of U6 small nuclear RNA (U6 snRNA): specifically N6-methylates adenine in position 43 of U6 snRNAs. Also able to bind various lncRNAs, such as 7SK snRNA (7SK RNA) or 7SL RNA. Specifically binds the 3'-end of the MALAT1 long non-coding RNA. The polypeptide is RNA N(6)-adenosine-methyltransferase METTL16 (Mus musculus (Mouse)).